A 1181-amino-acid chain; its full sequence is C5a peptidase (1181 aa).

Residues Met1–Ala31 form the signal peptide. A compositionally biased stretch (polar residues) spans Thr33 to Ala52. The disordered stretch occupies residues Thr33–Lys117. Over residues Asp70–Asn81 the composition is skewed to acidic residues. In terms of domain architecture, Peptidase S8 spans Lys99–Ser581. Active-site charge relay system residues include Asp130, His193, and Ser512. 4 stretches are compositionally biased toward basic and acidic residues: residues Glu1029–Gln1054, Pro1061–Gln1071, Pro1078–Gln1088, and Pro1095–Ser1107. Residues Glu1029–Lys1150 are disordered. Tandem repeats lie at residues Lys1034–Thr1050, Lys1051–Thr1067, Lys1068–Thr1084, Lys1085–Thr1101, and Lys1102–Lys1118. The tract at residues Lys1034–Lys1118 is 5 X 17 AA tandem repeats. 2 stretches are compositionally biased toward polar residues: residues Gly1109–Arg1123 and Lys1137–Thr1147. Positions Leu1144 to Asn1148 match the LPXTG sorting signal motif. A Pentaglycyl murein peptidoglycan amidated threonine modification is found at Thr1147. The propeptide at Asn1148 to Asp1181 is removed by sortase.

Belongs to the peptidase S8 family. In terms of processing, cleaved by SpeB protease; leading to its degradation. Degradation by SpeB is probably strictly regulated to preserve integrity of C5a peptidase.

The protein localises to the secreted. The protein resides in the cell wall. The catalysed reaction is The primary cleavage site is at 67-His-|-Lys-68 in human C5a with a minor secondary cleavage site at 58-Ala-|-Ser-59.. Functionally, this virulence factor of S.pyogenes specifically cleaves the human serum chemotaxin C5a at '68-Lys-|-Asp-69' bond near its C-terminus, destroying its ability to serve as a chemoattractant. This chain is C5a peptidase (scpA), found in Streptococcus pyogenes serotype M1.